A 145-amino-acid chain; its full sequence is uncharacterized protein (145 aa).

This is an uncharacterized protein from Deinococcus radiodurans (strain ATCC 13939 / DSM 20539 / JCM 16871 / CCUG 27074 / LMG 4051 / NBRC 15346 / NCIMB 9279 / VKM B-1422 / R1).